A 409-amino-acid chain; its full sequence is MAEDGINSYMTGPDEQGRFGIFGGRFVSETLMPLILDLEARYEHAKTDPDFWAEMDDLWKNYVGRPSPLYFAPRLTEHLGGAKIYLKRDELNHTGAHKINNVLGQIILARRMGKTRIIAETGAGQHGVATATVCAKFGLKCVVYMGAHDVERQAPNVFRMRLLGAEVVPVTSGRGTLKDAMNDALRDWVTNVRDTFYCIGTVAGPHPYPAMVRDFQSIIGREVRWQLAEQEEGRLPDTLVAAIGGGSNAMGLFHPFLDDPSVRIVGVEAGGKGVDDRMEHCASLTGGRPGVLHGNRTYLLQDADGQILEGFSISAGLDYPGIGPEHAWLHDTGRAEYVSITDAEALEAFQLCCALEGIIPALEPSHALAHVIKIAPTLPRDHIIVMNMCGRGDKDIFTVAKHLGFDMKI.

Lys-98 bears the N6-(pyridoxal phosphate)lysine mark.

Belongs to the TrpB family. Tetramer of two alpha and two beta chains. The cofactor is pyridoxal 5'-phosphate.

The enzyme catalyses (1S,2R)-1-C-(indol-3-yl)glycerol 3-phosphate + L-serine = D-glyceraldehyde 3-phosphate + L-tryptophan + H2O. It participates in amino-acid biosynthesis; L-tryptophan biosynthesis; L-tryptophan from chorismate: step 5/5. In terms of biological role, the beta subunit is responsible for the synthesis of L-tryptophan from indole and L-serine. This chain is Tryptophan synthase beta chain (trpB), found in Cereibacter sphaeroides (strain ATCC 17023 / DSM 158 / JCM 6121 / CCUG 31486 / LMG 2827 / NBRC 12203 / NCIMB 8253 / ATH 2.4.1.) (Rhodobacter sphaeroides).